A 301-amino-acid polypeptide reads, in one-letter code: Ribonuclease Z (301 aa).

Zn(2+)-binding residues include His-61, His-63, Asp-65, His-66, His-140, Asp-211, and His-269. Asp-65 acts as the Proton acceptor in catalysis.

Belongs to the RNase Z family. As to quaternary structure, homodimer. Zn(2+) serves as cofactor.

It catalyses the reaction Endonucleolytic cleavage of RNA, removing extra 3' nucleotides from tRNA precursor, generating 3' termini of tRNAs. A 3'-hydroxy group is left at the tRNA terminus and a 5'-phosphoryl group is left at the trailer molecule.. Functionally, zinc phosphodiesterase, which displays some tRNA 3'-processing endonuclease activity. Probably involved in tRNA maturation, by removing a 3'-trailer from precursor tRNA. This is Ribonuclease Z from Bradyrhizobium sp. (strain ORS 278).